Reading from the N-terminus, the 814-residue chain is Coiled-coil and C2 domain-containing protein 1-like (814 aa).

Positions 1-11 are enriched in basic and acidic residues; sequence MFAKRKPEPAK. 2 disordered regions span residues 1–136 and 157–263; these read MFAK…TFLP and EANA…RSRQ. Acidic residues predominate over residues 25–47; that stretch reads IPDDFDPTSGYGDDDGGDSDLEA. Over residues 73 to 85 the composition is skewed to basic and acidic residues; the sequence is DLDKMIADSLRDV. Acidic residues-rich tracts occupy residues 86–100 and 110–130; these read SDDDDDENLENDSDL and LEEEPEAEEAAAEPAASEEEP. The interval 143-201 is DM14 1; that stretch reads LGIIKQRLEIYKQAEANAKASGDSGKARRFGRGLKTLQDLHKQAAAGKTINVDDIPPEV. Low complexity predominate over residues 205-230; the sequence is PAGDPSPAADESPAPSTPVSQPTRVA. A compositionally biased stretch (pro residues) spans 231–254; sequence PAPPTPTSPPAATPPPAPATPPNP. DM14 regions lie at residues 256–314 and 358–416; these read VAQM…PPPP and LEAL…PVPP. Positions 351–378 form a coiled coil; the sequence is AAAAESMLEALQRRLEKYKSVEAAAKAE. Positions 414–425 are enriched in pro residues; sequence VPPGFGPLPSTE. A disordered region spans residues 414–486; it reads VPPGFGPLPS…LTTRVTGNHQ (73 aa). Low complexity predominate over residues 426-462; that stretch reads PAPAATPSLPTSPTSPPATASTSAGGTPSGSSATTPT. Positions 475 to 486 are enriched in polar residues; that stretch reads TELTTRVTGNHQ. Residues 495-553 are DM14 4; that stretch reads MKLLLERQKEFKVAAIEAKKAGEIDQAKEYLKIYKGFDSLLNAASSGLPVDLSTLPVPP. Residues 633–772 enclose the C2 domain; the sequence is RKGQPLPKFH…ETKCDIHDTY (140 aa).

This sequence belongs to the CC2D1 family. Interacts (via DM14 domains 1 and 3) with shrb; the interaction is direct and blocks access to the surface involved in shrb polymerization. This interaction may be required for the ESCRT-III complex role in multivesicular body formation.

The protein resides in the cytoplasm. It localises to the cytosol. The protein localises to the apicolateral cell membrane. It is found in the cell cortex. Its subcellular location is the endosome. In terms of biological role, phosphatidyl inositol monophosphate binding protein involved in endosomal protein sorting through regulation of the endosomal sorting required for transport (ESCRT) pathway. Required for full activity of the ESCRT-III complex core component shrb/shrub, probably by preventing its inappropriate polymerisation. Required, but not essential, for the efficient generation of intraluminal vesicles (ILVs) in multivesicular bodies (MVBs). Involved in a late stage of the endosomal pathway targeting transmembrane proteins of the plasma membrane for lysosomal degradation. Plays a critical role in regulation of multiple signal transduction pathways, including the Notch and BMP/decapentaplegic (dpp) signaling pathways, through targeting of membrane bound receptors to multivesicular bodies, isolating them from the cytoplasm and targeting them for lysosomal degradation. Involved in targeting N/Notch for endosomal degradation, negatively regulating the Notch signaling pathway. Regulates Notch signaling in imaginal disk cells and follicle cells during oogenesis and multiple developmental processes, including development of wings, veins, legs, eyes and bristles. Restricts the activity of Notch to the dorsoventral (D/V) boundary of the wing imaginal disk. In external sensory organ development regulates Notch signaling during asymmetric cell division and differentiation of sensory organ precursor cells. May be involved in regulation of apoptosis and cell growth independent of Notch signaling. Involved in targeting tkv for endosomal degradation, negatively regulating the BMP/decapentaplegic (dpp) signaling pathway. Regulates the BMP/dpp signaling pathway in follicle cells during oogenesis, but not in imaginal disk cells during wing development. May be involved in differentiation or morphogenesis of peripodial epithelial cells in the developing imaginal disk. Involved in abscission of germline cells during oogenesis. The chain is Coiled-coil and C2 domain-containing protein 1-like from Drosophila pseudoobscura pseudoobscura (Fruit fly).